The sequence spans 812 residues: Eukaryotic translation initiation factor 3 subunit C (812 aa).

Residues 1–110 (MSRFFSSNYE…EESDEEDGKK (110 aa)) are disordered. Acidic residues-rich tracts occupy residues 18–30 (SEED…EEDL) and 38–64 (SELD…DSDD). Phosphoserine is present on residues serine 98, serine 99, and serine 103. A PCI domain is found at 608-783 (YHQHINLDLI…TIFVVEKGDE (176 aa)).

It belongs to the eIF-3 subunit C family. The eukaryotic translation initiation factor 3 (eIF-3) core complex is composed of TIF32, PRT1, NIP1, TIF34 and TIF35. A subcomplex of TIF32, NIP1 and PRT1 mediates the interaction with eIF-1, TIF5/eIF-5 and HCR1. The factors eIF-1, eIF-2, eIF-3, TIF5/eIF-5 and methionyl-tRNAi form a multifactor complex (MFC) that may bind to the 40S ribosome. TIF32, NIP1 and TIF5/eIF-5 comprise a minimal 40S-ribosome-binding unit. NIP1 interacts with TIF5/eIF-5 and SUI1.

It is found in the cytoplasm. Its function is as follows. Component of the eukaryotic translation initiation factor 3 (eIF-3) complex, which is involved in protein synthesis of a specialized repertoire of mRNAs and, together with other initiation factors, stimulates binding of mRNA and methionyl-tRNAi to the 40S ribosome. The eIF-3 complex specifically targets and initiates translation of a subset of mRNAs involved in cell proliferation. The sequence is that of Eukaryotic translation initiation factor 3 subunit C from Saccharomyces cerevisiae (strain ATCC 204508 / S288c) (Baker's yeast).